The following is a 145-amino-acid chain: Large ribosomal subunit protein uL11 (145 aa).

It belongs to the universal ribosomal protein uL11 family. In terms of assembly, part of the ribosomal stalk of the 50S ribosomal subunit. Interacts with L10 and the large rRNA to form the base of the stalk. L10 forms an elongated spine to which L12 dimers bind in a sequential fashion forming a multimeric L10(L12)X complex. Post-translationally, one or more lysine residues are methylated.

Forms part of the ribosomal stalk which helps the ribosome interact with GTP-bound translation factors. The protein is Large ribosomal subunit protein uL11 of Corynebacterium glutamicum (strain ATCC 13032 / DSM 20300 / JCM 1318 / BCRC 11384 / CCUG 27702 / LMG 3730 / NBRC 12168 / NCIMB 10025 / NRRL B-2784 / 534).